The sequence spans 44 residues: Mu-conotoxin-like Cal 12.1.2h (44 aa).

Intrachain disulfides connect cysteine 3/cysteine 16, cysteine 11/cysteine 28, cysteine 18/cysteine 33, and cysteine 27/cysteine 38. 6'-bromotryptophan is present on tryptophan 17. Proline 23 is subject to 4-hydroxyproline. 6'-bromotryptophan is present on residues tryptophan 36 and tryptophan 37. Position 39 is a 4-hydroxyproline (proline 39). Tryptophan 43 is subject to 6'-bromotryptophan.

Expressed by the venom duct.

The protein localises to the secreted. Its function is as follows. Mu-conotoxins block voltage-gated sodium channels. This toxin reversibly blocks voltage-gated sodium channel in cephalopods, with no alteration in the voltage dependence of sodium conductance or on the kinetics of inactivation. This Californiconus californicus (California cone) protein is Mu-conotoxin-like Cal 12.1.2h.